The primary structure comprises 131 residues: Cuticle protein 79, isoform B (131 aa).

Repeat copies occupy residues 37-40 (AAPA), 45-48 (AAPA), and 53-56 (AAPA).

Functionally, component of the cuticle of migratory locust which contains more than 100 different structural proteins. The polypeptide is Cuticle protein 79, isoform B (Locusta migratoria (Migratory locust)).